The chain runs to 264 residues: Transmembrane protein 41A (264 aa).

The first 17 residues, 1-17 (MHSLLGLLLVFAGSTFA), serve as a signal peptide directing secretion. Helical transmembrane passes span 67–87 (VYVF…AIPG), 90–110 (FLNV…LCCV), 153–173 (LFFF…FLNL), 175–195 (APIL…GLIP), and 219–239 (WETA…GTLI). The segment at 96-207 (GALFGPWLGL…FICVQTGSIL (112 aa)) is VTT domain.

Belongs to the TMEM41 family.

It localises to the membrane. The sequence is that of Transmembrane protein 41A (TMEM41A) from Bos taurus (Bovine).